A 311-amino-acid chain; its full sequence is Methionyl-tRNA formyltransferase (311 aa).

A (6S)-5,6,7,8-tetrahydrofolate-binding site is contributed by 117–120; the sequence is SLLP.

The protein belongs to the Fmt family.

It carries out the reaction L-methionyl-tRNA(fMet) + (6R)-10-formyltetrahydrofolate = N-formyl-L-methionyl-tRNA(fMet) + (6S)-5,6,7,8-tetrahydrofolate + H(+). Functionally, attaches a formyl group to the free amino group of methionyl-tRNA(fMet). The formyl group appears to play a dual role in the initiator identity of N-formylmethionyl-tRNA by promoting its recognition by IF2 and preventing the misappropriation of this tRNA by the elongation apparatus. The protein is Methionyl-tRNA formyltransferase of Bordetella avium (strain 197N).